We begin with the raw amino-acid sequence, 404 residues long: Cysteine desulfurase IscS (404 aa).

Residues 75–76 (AT), Asn-155, Gln-183, and 203–205 (SGH) each bind pyridoxal 5'-phosphate. Lys-206 carries the N6-(pyridoxal phosphate)lysine modification. Thr-243 is a pyridoxal 5'-phosphate binding site. Cys-328 functions as the Cysteine persulfide intermediate in the catalytic mechanism. [2Fe-2S] cluster is bound at residue Cys-328.

The protein belongs to the class-V pyridoxal-phosphate-dependent aminotransferase family. NifS/IscS subfamily. In terms of assembly, homodimer. Forms a heterotetramer with IscU, interacts with other sulfur acceptors. It depends on pyridoxal 5'-phosphate as a cofactor.

Its subcellular location is the cytoplasm. It catalyses the reaction (sulfur carrier)-H + L-cysteine = (sulfur carrier)-SH + L-alanine. It functions in the pathway cofactor biosynthesis; iron-sulfur cluster biosynthesis. Its function is as follows. Master enzyme that delivers sulfur to a number of partners involved in Fe-S cluster assembly, tRNA modification or cofactor biosynthesis. Catalyzes the removal of elemental sulfur atoms from cysteine to produce alanine. Functions as a sulfur delivery protein for Fe-S cluster synthesis onto IscU, an Fe-S scaffold assembly protein, as well as other S acceptor proteins. The sequence is that of Cysteine desulfurase IscS from Shewanella putrefaciens (strain CN-32 / ATCC BAA-453).